The following is a 171-amino-acid chain: Spiderine-2b (171 aa).

The N-terminal stretch at 1–18 (MKFALVLLGFCAFYLVNA) is a signal peptide. A propeptide spans 19–58 (TGDLETELEASDLQELQEALDLIAETPLESLEAEELEEAR) (removed in mature form). The tract at residues 59–104 (KFKFPKINWGKLASKAKDVYKKGQKLAKNKNVKKALKYGKQLAENL) is linear cationic cytotoxin domain. Positions 118–171 (NNKCWAIGTRCTDDCDCCPEHHCHCPAKSWTFGLIPCSCQVTESDKVNKCPPAE) constitute an Oxytoxin-type inhibitor cystine knot (ICK) domain. Cystine bridges form between Cys121-Cys135, Cys128-Cys140, Cys132-Cys167, Cys134-Cys156, and Cys142-Cys154.

This sequence belongs to the spiderine family. Cationic/spiderine subfamily. Expressed by the venom gland.

The protein localises to the secreted. In terms of biological role, has antimicrobial, insecticidal, cytolytic and cytotoxic activity. The polypeptide is Spiderine-2b (Oxyopes takobius (Lynx spider)).